Consider the following 223-residue polypeptide: Cytidylate kinase (223 aa).

13 to 21 (GPSASGKGT) serves as a coordination point for ATP.

Belongs to the cytidylate kinase family. Type 1 subfamily.

The protein resides in the cytoplasm. It carries out the reaction CMP + ATP = CDP + ADP. The catalysed reaction is dCMP + ATP = dCDP + ADP. This is Cytidylate kinase from Nitrosomonas europaea (strain ATCC 19718 / CIP 103999 / KCTC 2705 / NBRC 14298).